The sequence spans 401 residues: CCA-adding enzyme (401 aa).

2 residues coordinate ATP: G32 and R35. 2 residues coordinate CTP: G32 and R35. Residues D45 and D47 each contribute to the Mg(2+) site. ATP-binding residues include R116, D159, R162, R165, and R168. CTP-binding residues include R116, D159, R162, R165, and R168.

It belongs to the tRNA nucleotidyltransferase/poly(A) polymerase family. Bacterial CCA-adding enzyme type 3 subfamily. In terms of assembly, homodimer. Mg(2+) is required as a cofactor.

It catalyses the reaction a tRNA precursor + 2 CTP + ATP = a tRNA with a 3' CCA end + 3 diphosphate. The catalysed reaction is a tRNA with a 3' CCA end + 2 CTP + ATP = a tRNA with a 3' CCACCA end + 3 diphosphate. Its function is as follows. Catalyzes the addition and repair of the essential 3'-terminal CCA sequence in tRNAs without using a nucleic acid template. Adds these three nucleotides in the order of C, C, and A to the tRNA nucleotide-73, using CTP and ATP as substrates and producing inorganic pyrophosphate. tRNA 3'-terminal CCA addition is required both for tRNA processing and repair. Also involved in tRNA surveillance by mediating tandem CCA addition to generate a CCACCA at the 3' terminus of unstable tRNAs. While stable tRNAs receive only 3'-terminal CCA, unstable tRNAs are marked with CCACCA and rapidly degraded. This Leuconostoc mesenteroides subsp. mesenteroides (strain ATCC 8293 / DSM 20343 / BCRC 11652 / CCM 1803 / JCM 6124 / NCDO 523 / NBRC 100496 / NCIMB 8023 / NCTC 12954 / NRRL B-1118 / 37Y) protein is CCA-adding enzyme.